The chain runs to 66 residues: Large ribosomal subunit protein bL35 (66 aa).

Residues 1–42 (MPKQKTHRASAKRFKRTANGGLKRHHAYTGHRFHGKTKKQRR) are disordered.

This sequence belongs to the bacterial ribosomal protein bL35 family.

The sequence is that of Large ribosomal subunit protein bL35 from Lactobacillus gasseri (strain ATCC 33323 / DSM 20243 / BCRC 14619 / CIP 102991 / JCM 1131 / KCTC 3163 / NCIMB 11718 / NCTC 13722 / AM63).